The sequence spans 439 residues: Xylose isomerase (439 aa).

Residues histidine 101 and aspartate 104 contribute to the active site. 7 residues coordinate Mg(2+): glutamate 232, glutamate 268, histidine 271, aspartate 296, aspartate 307, aspartate 309, and aspartate 339.

Belongs to the xylose isomerase family. As to quaternary structure, homotetramer. It depends on Mg(2+) as a cofactor.

The protein resides in the cytoplasm. It catalyses the reaction alpha-D-xylose = alpha-D-xylulofuranose. The sequence is that of Xylose isomerase from Marinomonas sp. (strain MWYL1).